A 243-amino-acid chain; its full sequence is Carboxy-S-adenosyl-L-methionine synthase (243 aa).

Residues tyrosine 40, 65-67 (GSS), 90-91 (DN), 118-119 (DI), asparagine 133, and arginine 200 contribute to the S-adenosyl-L-methionine site.

This sequence belongs to the class I-like SAM-binding methyltransferase superfamily. Cx-SAM synthase family. In terms of assembly, homodimer.

It catalyses the reaction prephenate + S-adenosyl-L-methionine = carboxy-S-adenosyl-L-methionine + 3-phenylpyruvate + H2O. Catalyzes the conversion of S-adenosyl-L-methionine (SAM) to carboxy-S-adenosyl-L-methionine (Cx-SAM). This chain is Carboxy-S-adenosyl-L-methionine synthase, found in Shewanella denitrificans (strain OS217 / ATCC BAA-1090 / DSM 15013).